A 275-amino-acid chain; its full sequence is Dermonecrotic toxin LspiSicTox-betaIE4i (275 aa).

Mg(2+) contacts are provided by Glu-24 and Asp-26. The Nucleophile role is filled by His-40. Disulfide bonds link Cys-44/Cys-50 and Cys-46/Cys-188. Position 84 (Asp-84) interacts with Mg(2+).

This sequence belongs to the arthropod phospholipase D family. Class II subfamily. It depends on Mg(2+) as a cofactor. As to expression, expressed by the venom gland.

The protein localises to the secreted. It catalyses the reaction an N-(acyl)-sphingosylphosphocholine = an N-(acyl)-sphingosyl-1,3-cyclic phosphate + choline. The catalysed reaction is an N-(acyl)-sphingosylphosphoethanolamine = an N-(acyl)-sphingosyl-1,3-cyclic phosphate + ethanolamine. The enzyme catalyses a 1-acyl-sn-glycero-3-phosphocholine = a 1-acyl-sn-glycero-2,3-cyclic phosphate + choline. It carries out the reaction a 1-acyl-sn-glycero-3-phosphoethanolamine = a 1-acyl-sn-glycero-2,3-cyclic phosphate + ethanolamine. Dermonecrotic toxins cleave the phosphodiester linkage between the phosphate and headgroup of certain phospholipids (sphingolipid and lysolipid substrates), forming an alcohol (often choline) and a cyclic phosphate. This toxin acts on sphingomyelin (SM). It may also act on ceramide phosphoethanolamine (CPE), lysophosphatidylcholine (LPC) and lysophosphatidylethanolamine (LPE), but not on lysophosphatidylserine (LPS), and lysophosphatidylglycerol (LPG). It acts by transphosphatidylation, releasing exclusively cyclic phosphate products as second products. Induces dermonecrosis, hemolysis, increased vascular permeability, edema, inflammatory response, and platelet aggregation. The sequence is that of Dermonecrotic toxin LspiSicTox-betaIE4i from Loxosceles spinulosa (Recluse spider).